The sequence spans 498 residues: MLSSSALYAAIDLGSNSFHMLVVREVAGSIQTLARIKRKVRLAAGLDQNNLLSHEAMQRGWQCLKLFSERLQDIPRAQIRVVATATLRLASNADEFLQTAEQILGCPIQVISGEEEARLIYHGVAHTTGGPDQRLVVDIGGGSTELVTGTGAQAAQLYSLSMGCVTWLERFFSDRNLGQENFERAEQAAREMVRPIAPQLRQHGWQVCVGASGTVQALQEIMVAQGMDERITLSKLRQLKQRAIQCGKLEELEIEGLTLERALVFPSGLSILLAIFQELGIESMMLAGGALREGLVYGMLHLPVEQDIRSRTIRNLQRRYLLDTEQAERVSQLAANFSQQVSNEWQLDARCRELLHSACLIHEIGLSVDFKQAPQHAAYLIRHLDLPGFTPAQKKLLATLLQNQSNTIDLPLLSQQNALPPRTAQRLCRILRLAIIFASRRRDDTLPAVRLRANNDDELTVILPPGWLEQHPLRAEALDQESHWQSYVHWPLILEEQR.

Belongs to the GppA/Ppx family. GppA subfamily.

It carries out the reaction guanosine 3'-diphosphate 5'-triphosphate + H2O = guanosine 3',5'-bis(diphosphate) + phosphate + H(+). The protein operates within purine metabolism; ppGpp biosynthesis; ppGpp from GTP: step 2/2. Functionally, catalyzes the conversion of pppGpp to ppGpp. Guanosine pentaphosphate (pppGpp) is a cytoplasmic signaling molecule which together with ppGpp controls the 'stringent response', an adaptive process that allows bacteria to respond to amino acid starvation, resulting in the coordinated regulation of numerous cellular activities. This Serratia proteamaculans (strain 568) protein is Guanosine-5'-triphosphate,3'-diphosphate pyrophosphatase.